The sequence spans 301 residues: Probable alpha-L-glutamate ligase (301 aa).

The ATP-grasp domain maps to 104–287 (LQLLSRKGIG…IAGLIVAYME (184 aa)). ATP-binding positions include Lys141, 178 to 179 (EF), Asp187, and 211 to 213 (RSN). Mg(2+)-binding residues include Asp248, Glu260, and Asn262. Asp248, Glu260, and Asn262 together coordinate Mn(2+).

It belongs to the RimK family. The cofactor is Mg(2+). Mn(2+) serves as cofactor.

In Cellvibrio japonicus (strain Ueda107) (Pseudomonas fluorescens subsp. cellulosa), this protein is Probable alpha-L-glutamate ligase.